The chain runs to 475 residues: tRNA-2-methylthio-N(6)-dimethylallyladenosine synthase (475 aa).

Residues 1–10 show a composition bias toward basic and acidic residues; that stretch reads MQETTVKRDG. The tract at residues 1–22 is disordered; that stretch reads MQETTVKRDGASPSDAGTPATT. An MTTase N-terminal domain is found at 27–144; it reads GKLYIRTFGC…LPDLIKRRRA (118 aa). [4Fe-4S] cluster is bound by residues Cys-36, Cys-73, Cys-107, Cys-181, Cys-185, and Cys-188. One can recognise a Radical SAM core domain in the interval 167 to 400; sequence RVDGATAFVS…QALINQQAAA (234 aa). The TRAM domain maps to 403–466; it reads QGMIGTRQRV…TNSLRGRVAG (64 aa).

Belongs to the methylthiotransferase family. MiaB subfamily. As to quaternary structure, monomer. [4Fe-4S] cluster is required as a cofactor.

It localises to the cytoplasm. It catalyses the reaction N(6)-dimethylallyladenosine(37) in tRNA + (sulfur carrier)-SH + AH2 + 2 S-adenosyl-L-methionine = 2-methylsulfanyl-N(6)-dimethylallyladenosine(37) in tRNA + (sulfur carrier)-H + 5'-deoxyadenosine + L-methionine + A + S-adenosyl-L-homocysteine + 2 H(+). Functionally, catalyzes the methylthiolation of N6-(dimethylallyl)adenosine (i(6)A), leading to the formation of 2-methylthio-N6-(dimethylallyl)adenosine (ms(2)i(6)A) at position 37 in tRNAs that read codons beginning with uridine. The chain is tRNA-2-methylthio-N(6)-dimethylallyladenosine synthase from Bordetella parapertussis (strain 12822 / ATCC BAA-587 / NCTC 13253).